The sequence spans 218 residues: uncharacterized protein (218 aa).

One can recognise an ACT domain in the interval 4-83 (GISIEAENKV…IHSSLKKIYG (80 aa)).

This is an uncharacterized protein from Methanocaldococcus jannaschii (strain ATCC 43067 / DSM 2661 / JAL-1 / JCM 10045 / NBRC 100440) (Methanococcus jannaschii).